The sequence spans 418 residues: Metacaspase-4 (418 aa).

Active-site residues include histidine 86 and cysteine 139. S-nitrosocysteine is present on cysteine 139. The segment at 153-172 (GESTKKEAEDEDESEESSSR) is disordered.

It belongs to the peptidase C14B family. The two subunits are derived from the precursor sequence by an autocatalytic mechanism. In terms of tissue distribution, expressed in roots, cotyledons, leaves, cauline leaves, pollen and embryos.

Its subcellular location is the cytoplasm. The protein localises to the cytosol. Its activity is regulated as follows. Activated by Ca(2+) which induces self-processing and accelerates the rate of the enzyme activity, but has no effect on Km. Functionally, cysteine protease that cleaves specifically after arginine or lysine residues. Does not cleave caspase-specific substrates. Plays a positive regulatory role in biotic and abiotic stress-induced programmed cell death. This Arabidopsis thaliana (Mouse-ear cress) protein is Metacaspase-4 (AMC4).